Consider the following 346-residue polypeptide: MERNLSTVKTLVQFITESQKHVFGASGDLSKILNDIAVAAKIINREVNKAGLLDILGMEGGMNVQNEEVKKLDVYANDQFISALRSGGQCCAIASEENTDIIPIENNGHSKSNYVVLIDPLDGSSNIDVNVAIGSIFSIYRRVSESGPGETVDCMQVGNKQVAAGYIIYGSSTMMVYTTGDGVNGFTLDPSIGEFCLSHPNLKIPEDGFIYSVNEGNYADFPREIQEYIYYCKTPDFETSRPYSSRYIGSMVADFHRNLIKGGIFMYPATAKYPLGKLRLMYECNPLAFIVEQAGGKAIDGEGRILDIEPTNIHQRTGIIIGSKNMVEKVEAFIQMNVGLNVYRLK.

Residues E96, D119, L121, and D122 each contribute to the Mg(2+) site. Substrate is bound by residues D122–S125, N214, Y247, and K277. E283 serves as a coordination point for Mg(2+).

This sequence belongs to the FBPase class 1 family. As to quaternary structure, homotetramer. The cofactor is Mg(2+).

Its subcellular location is the cytoplasm. The enzyme catalyses beta-D-fructose 1,6-bisphosphate + H2O = beta-D-fructose 6-phosphate + phosphate. Its pathway is carbohydrate biosynthesis; gluconeogenesis. The protein is Fructose-1,6-bisphosphatase class 1 of Cytophaga hutchinsonii (strain ATCC 33406 / DSM 1761 / CIP 103989 / NBRC 15051 / NCIMB 9469 / D465).